The following is a 632-amino-acid chain: MNASESCEELNATLSAYLESLDSRQRQVEEIRQLHHKVWAMKTNHAPIIEHRAGSRVEKQTRICPNDIRSDIDFMLEVNNVVVFAKGNGGICFQPTSRDGYFGRILISDQYRDSLMIDTHLKAIFTESSLKRDKFSNRFVLVPNVFKQNVVRESGLKYQQTKSPQSTGPSIPGRGVVNEYDVVPCLRLNTWPEETTTWISRGKPLSVFDPSWRKKVLVASPVFLVAAGEINSCFQKEQFRTSFSMPEIECFKKLPNLVRQLFGLAKYVFTYLLSSVGFLSWFHIKYLLFWMVEKDEIDWNNISPVCFLFHLMDSIKQSVRDGNVQHFFLDNCNIFPEHRRTYEREYAYDQILSDKQLVTECLKRLLRTELLETSRTVMASEFTNTESRLVSSNTYCDGYLTRLLSVIVFVWQETSASEKMSSSFAEKILEDCGVNEYTRKLVTILELYFRGNVPGKLSLNSLAHGAFLAYMQGDFAVCLSSCSQHVTSTCVRDDDCILGVTLTRYDRTPHLDEPLRFALDRLEQKFGTCPRVSLHPLFFLKHVLLQCELKKRDNGLKCLDTLFSDLHGFSKSLSPRTPYCGLLSYQAVAFLVIEGYNEYFKRENIDIRLYETDTYVKLDISLTPATCSFDLR.

Positions 71, 73, and 181 each coordinate Mg(2+). Asp295 is a Mn(2+) binding site.

It belongs to the mab-21 family. Mg(2+) serves as cofactor. Mn(2+) is required as a cofactor.

Nucleotidyltransferase that catalyzes the formation of some cyclic nucleotide and plays a key role in innate immunity. Directly binds some unknown ligand, activating the nucleotidyltransferase activity, leading to synthesis of a second messenger that binds to and activates Sting, thereby triggering the immune response via activation of the NF-kappa-B transcription factor. The polypeptide is Cyclic GMP-AMP synthase-like receptor 2 (Crassostrea virginica (Eastern oyster)).